Consider the following 212-residue polypeptide: Troponin I, cardiac muscle (212 aa).

Positions 1-11 (MADRSGGSTAG) are enriched in polar residues. The interval 1–45 (MADRSGGSTAGDTVPAPPPVRRRSSANYRAYATEPHAKKKSKISA) is disordered. The residue at position 2 (Ala2) is an N-acetylalanine. Ser5 carries the phosphoserine modification. A phosphoserine; by PKA and PKD/PRKD1 mark is found at Ser24 and Ser25. Residue Tyr28 is modified to Phosphotyrosine. Thr33 is modified (phosphothreonine; by STK4/MST1). Positions 34-81 (EPHAKKKSKISASRKLQLKTLMLQIAKQELEREAEERRGEKGRALSTR) are involved in binding TNC. Phosphoserine; by PKC/PRKCE is present on residues Ser44 and Ser46. Thr53 is subject to Phosphothreonine; by STK4/MST1. Ser79 bears the Phosphoserine mark. Residue Thr80 is modified to Phosphothreonine. The tract at residues 131–151 (NQKIFDLRGKFKRPTLRRVRI) is involved in binding TNC and actin. At Thr145 the chain carries Phosphothreonine; by STK4/MST1. Ser152 carries the post-translational modification Phosphoserine; by PAK3. Thr183 bears the Phosphothreonine mark. Phosphoserine is present on Ser201.

The protein belongs to the troponin I family. In terms of assembly, interacts with TRIM63. Binds to actin and tropomyosin. Interacts with STK4/MST1. Phosphorylated at Ser-24 and Ser-25 by PRKD1; phosphorylation reduces myofilament calcium sensitivity. Phosphorylated preferentially at Thr-33. Phosphorylation by STK4/MST1 alters its binding affinity to TNNC1 (cardiac Tn-C) and TNNT2 (cardiac Tn-T). Phosphorylated at Ser-44 and Ser-46 by PRKCE; phosphorylation increases myocardium contractile dysfunction.

Troponin I is the inhibitory subunit of troponin, the thin filament regulatory complex which confers calcium-sensitivity to striated muscle actomyosin ATPase activity. This Bos taurus (Bovine) protein is Troponin I, cardiac muscle (TNNI3).